Reading from the N-terminus, the 222-residue chain is V-type ATP synthase subunit D (222 aa).

This sequence belongs to the V-ATPase D subunit family.

In terms of biological role, produces ATP from ADP in the presence of a proton gradient across the membrane. The sequence is that of V-type ATP synthase subunit D from Clostridioides difficile (strain 630) (Peptoclostridium difficile).